The following is a 355-amino-acid chain: Fructose-bisphosphate aldolase, cytoplasmic isozyme (355 aa).

Substrate contacts are provided by Arg52 and Lys142. Residue Glu183 is the Proton acceptor of the active site. Lys225 serves as the catalytic Schiff-base intermediate with dihydroxyacetone-P.

It belongs to the class I fructose-bisphosphate aldolase family.

It is found in the cytoplasm. The catalysed reaction is beta-D-fructose 1,6-bisphosphate = D-glyceraldehyde 3-phosphate + dihydroxyacetone phosphate. It participates in carbohydrate degradation; glycolysis; D-glyceraldehyde 3-phosphate and glycerone phosphate from D-glucose: step 4/4. This Zea mays (Maize) protein is Fructose-bisphosphate aldolase, cytoplasmic isozyme.